The sequence spans 2148 residues: Polyketide synthase 1 (2148 aa).

Residues 19–261 are N-terminal acylcarrier protein transacylase domain (SAT); the sequence is FIFGDQSSCN…TPLAVHAPYH (243 aa). One can recognise a Ketosynthase family 3 (KS3) domain in the interval 394 to 829; sequence ESKIAIIGMS…GGNTALLVED (436 aa). Active-site for beta-ketoacyl synthase activity residues include Cys-566, His-701, and His-745. Positions 929–1233 are malonyl-CoA:ACP transacylase (MAT) domain; it reads AFVFSGQGSQ…PSLMRNKDGW (305 aa). Ser-1018 serves as the catalytic For acyl/malonyl transferase activity. The tract at residues 1310–1624 is product template (PT) domain; sequence TASVHRIVHE…RKVLNTAMPP (315 aa). The segment at 1314-1447 is N-terminal hotdog fold; the sequence is HRIVHESVEK…SSLHFEQPKV (134 aa). The PKS/mFAS DH domain occupies 1314–1619; the sequence is HRIVHESVEK…FQGIPRKVLN (306 aa). The active-site Proton acceptor; for dehydratase activity is the His-1346. The tract at residues 1474–1619 is C-terminal hotdog fold; the sequence is LNSRMSSGVI…FQGIPRKVLN (146 aa). Asp-1533 (proton donor; for dehydratase activity) is an active-site residue. The tract at residues 1619 to 1655 is disordered; that stretch reads NTAMPPPKSQNEAPVRSGPAKPAVKPPRSASSEHSGH. The Carrier 1 domain occupies 1678-1752; sequence RNPMLPVFKI…DLAAHLGMDT (75 aa). An O-(pantetheine 4'-phosphoryl)serine modification is found at Ser-1712. Over residues 1755-1790 the composition is skewed to low complexity; it reads ADQSSGQSSSSGGLSPRSDSIGEMTSSATTPPSMSP. Residues 1755–1796 are disordered; the sequence is ADQSSGQSSSSGGLSPRSDSIGEMTSSATTPPSMSPRGSVSG. In terms of domain architecture, Carrier 2 spans 1793–1870; sequence SVSGSQCKDV…SFKHMFQQGH (78 aa). Ser-1830 carries the post-translational modification O-(pantetheine 4'-phosphoryl)serine. The tract at residues 1882 to 2146 is thioesterase (TE) domain; that stretch reads LKQYRATSTL…ERVAAFIRSI (265 aa). Ser-1973 (for thioesterase activity) is an active-site residue.

Its function is as follows. Polyketide synthase; part of the Pks1 gene cluster that mediates the biosynthesis of an anthraquinone derivative pigment that contributes to conidial pigmentation that provides protection from UV radiation, heat and cold stress. The polyketide synthase Pks1 produces 1-acetyl-2,4,6,8-tetrahydroxy-9,10-anthraquinone though condensation of acetyl-CoA with malonyl-CoA. The dehydratase EthD and the laccase Mlac1 further convert the anthraquinone derivative into the final conidial pigment. In Metarhizium brunneum (strain ARSEF 3297), this protein is Polyketide synthase 1.